A 500-amino-acid polypeptide reads, in one-letter code: L-arabinose isomerase (500 aa).

4 residues coordinate Mn(2+): E306, E333, H350, and H450.

The protein belongs to the arabinose isomerase family. As to quaternary structure, homohexamer. Mn(2+) is required as a cofactor.

The enzyme catalyses beta-L-arabinopyranose = L-ribulose. Its pathway is carbohydrate degradation; L-arabinose degradation via L-ribulose; D-xylulose 5-phosphate from L-arabinose (bacterial route): step 1/3. Catalyzes the conversion of L-arabinose to L-ribulose. This is L-arabinose isomerase from Salmonella paratyphi A (strain ATCC 9150 / SARB42).